The chain runs to 388 residues: MNINTMNKHTTNLNIIKNINNINNLNSIKELLLLLNNKRLNRSLNKTYIWDYLNELSNKGVKLQHLNNINSWSSQIYKFNKTEEINNTIYDRLVTKLLTKLLVLNINNKIYKLIISKPIFEHSINKVNIKFFYYLSYKNINKNINNNNNLINNIYSNYKFNINSKLINLLNNNINSISNILSLYYNKDVSFEPIQLKYNYMNSDILAKSLKIMNSSSKRSLSMNRIKNLMNNMPKLNDKLISQTYINNINNIMFNKYNNIIKSINNNNNNNPADSSPGNPRGGAAGKLYNIIYENNNINTIPNNILMFKYLVGWSIQLKGRLSNNKSISRSNTMNILNGTFQNYKYIWGNQMVNNYKLNYIPVNHNITNISDVNKNGKYNIKVKLNTI.

It belongs to the universal ribosomal protein uS3 family.

The protein resides in the mitochondrion. In terms of biological role, essential for mitochondrial protein synthesis and required for the maturation of small ribosomal subunits. In Kluyveromyces lactis (strain ATCC 8585 / CBS 2359 / DSM 70799 / NBRC 1267 / NRRL Y-1140 / WM37) (Yeast), this protein is Small ribosomal subunit protein uS3m (VAR1).